Reading from the N-terminus, the 286-residue chain is Small ribosomal subunit protein uS2 (286 aa).

Positions Lys-257–Gly-286 are disordered.

Belongs to the universal ribosomal protein uS2 family.

The chain is Small ribosomal subunit protein uS2 from Ehrlichia ruminantium (strain Gardel).